The chain runs to 146 residues: Hemoglobin subunit beta (146 aa).

Valine 1 is modified (N-acetylvaline). One can recognise a Globin domain in the interval 2-146; it reads HLSGGEKSAV…VAHALGHKYH (145 aa). Position 12 is a phosphothreonine (threonine 12). Lysine 59 bears the N6-acetyllysine mark. Residue histidine 63 coordinates heme b. Residue lysine 82 is modified to N6-acetyllysine. Histidine 92 serves as a coordination point for heme b. Cysteine 93 carries the S-nitrosocysteine modification. N6-acetyllysine is present on lysine 144.

It belongs to the globin family. In terms of assembly, heterotetramer of two alpha chains and two beta chains. In terms of tissue distribution, red blood cells.

Involved in oxygen transport from the lung to the various peripheral tissues. This Ornithorhynchus anatinus (Duckbill platypus) protein is Hemoglobin subunit beta (HBB).